Reading from the N-terminus, the 93-residue chain is Aspartyl/glutamyl-tRNA(Asn/Gln) amidotransferase subunit C (93 aa).

It belongs to the GatC family. In terms of assembly, heterotrimer of A, B and C subunits.

It carries out the reaction L-glutamyl-tRNA(Gln) + L-glutamine + ATP + H2O = L-glutaminyl-tRNA(Gln) + L-glutamate + ADP + phosphate + H(+). The catalysed reaction is L-aspartyl-tRNA(Asn) + L-glutamine + ATP + H2O = L-asparaginyl-tRNA(Asn) + L-glutamate + ADP + phosphate + 2 H(+). Functionally, allows the formation of correctly charged Asn-tRNA(Asn) or Gln-tRNA(Gln) through the transamidation of misacylated Asp-tRNA(Asn) or Glu-tRNA(Gln) in organisms which lack either or both of asparaginyl-tRNA or glutaminyl-tRNA synthetases. The reaction takes place in the presence of glutamine and ATP through an activated phospho-Asp-tRNA(Asn) or phospho-Glu-tRNA(Gln). The sequence is that of Aspartyl/glutamyl-tRNA(Asn/Gln) amidotransferase subunit C from Helicobacter pylori (strain HPAG1).